A 306-amino-acid chain; its full sequence is tRNA dimethylallyltransferase (306 aa).

15–22 is an ATP binding site; the sequence is GPTASGKS. Substrate is bound at residue 17–22; it reads TASGKS. The interaction with substrate tRNA stretch occupies residues 40-43; sequence DSMQ.

This sequence belongs to the IPP transferase family. As to quaternary structure, monomer. The cofactor is Mg(2+).

The catalysed reaction is adenosine(37) in tRNA + dimethylallyl diphosphate = N(6)-dimethylallyladenosine(37) in tRNA + diphosphate. Catalyzes the transfer of a dimethylallyl group onto the adenine at position 37 in tRNAs that read codons beginning with uridine, leading to the formation of N6-(dimethylallyl)adenosine (i(6)A). The protein is tRNA dimethylallyltransferase of Methylobacterium sp. (strain 4-46).